Reading from the N-terminus, the 619-residue chain is Enolase 4 (619 aa).

Residues 173–184 are compositionally biased toward basic and acidic residues; the sequence is DKERKELEKSQE. The segment at 173–236 is disordered; the sequence is DKERKELEKS…PPEPPEPVLH (64 aa). The span at 188-206 shows a compositional bias: pro residues; the sequence is PAPPPVTLPPPPPPPPPPP. Residue Glu-302 coordinates substrate. Residues 333 to 354 are disordered; that stretch reads TLPPPKQETKKGHNGSKRAQPP. Lys-497 serves as the catalytic Proton acceptor. Lys-548 is a binding site for substrate.

The protein belongs to the enolase family. Interacts with ENO1. Isoform 1 and isoform 4 interact with AKAP4. In terms of processing, synthesized as an approximately 70-kDa precursor, which then undergoes proteolytic cleavage to an approximately 60-kDa enzyme; HOATZ associates directly or indirectly with ENO4 to mediate this process before its transport to mature flagella. In terms of tissue distribution, testis-specific. Expressed in spermatids and ependyma (at protein level). As to expression, expressed at higher levels in late spermatids than in pachytene spermatocytes. Expressed at higher levels in pachytene spermatocytes than in late spermatids.

The catalysed reaction is (2R)-2-phosphoglycerate = phosphoenolpyruvate + H2O. The protein operates within carbohydrate degradation; glycolysis; pyruvate from D-glyceraldehyde 3-phosphate: step 4/5. In terms of biological role, required for sperm motility, function and male fertility. May be involved in the normal assembly of the sperm fibrous sheath and provides most of the enolase activity in sperm. The sequence is that of Enolase 4 (Eno4) from Mus musculus (Mouse).